We begin with the raw amino-acid sequence, 623 residues long: Methionine--tRNA ligase (623 aa).

Positions 11 to 21 (PYANGPRHIGH) match the 'HIGH' region motif. Zn(2+)-binding residues include cysteine 143, cysteine 146, cysteine 156, and cysteine 159. The 'KMSKS' region signature appears at 347–351 (KFSSS). Serine 350 is a binding site for ATP.

This sequence belongs to the class-I aminoacyl-tRNA synthetase family. MetG type 1 subfamily. Monomer. Zn(2+) is required as a cofactor.

It localises to the cytoplasm. The enzyme catalyses tRNA(Met) + L-methionine + ATP = L-methionyl-tRNA(Met) + AMP + diphosphate. Its function is as follows. Is required not only for elongation of protein synthesis but also for the initiation of all mRNA translation through initiator tRNA(fMet) aminoacylation. The chain is Methionine--tRNA ligase from Bifidobacterium animalis subsp. lactis (strain AD011).